Reading from the N-terminus, the 320-residue chain is Tabersonine synthase (320 aa).

Positions 78–80 (HGA) match the Involved in the stabilization of the negatively charged intermediate by the formation of the oxyanion hole motif. Gly-81 serves as a coordination point for (-)-tabersonine. The active-site Proton acceptor is Ser-170. Residue Asp-266 is part of the active site. Tyr-297 is a (-)-tabersonine binding site. Tyr-297 serves as the catalytic Proton donor/acceptor.

This sequence belongs to the 'GDXG' lipolytic enzyme family. In terms of assembly, interacts with dehydroprecondylocarpine acetate synthase (DPAS). Expressed in leaf epidermis.

The protein resides in the cytoplasm. It is found in the cytosol. The protein localises to the nucleus. It catalyses the reaction dehydrosecodine = (-)-tabersonine. The catalysed reaction is dihydroprecondylocarpine acetate = (-)-tabersonine + acetate + H(+). It participates in alkaloid biosynthesis. Functionally, component of iboga and aspidosperma monoterpenoid indole alkaloids (MIAs, e.g. tabersonine and catharanthine) biosynthesis pathway from 19E-geissoschizine, psychoactive compounds likely to be used in the treatment of opioid dependence. Catalyzes the conversion of dehydrosecodine to tabersonine, a precursor of vindoline; this process starts with the conversion of dihydroprecondylocarpine acetate to dehydrosecodine. This is Tabersonine synthase from Catharanthus roseus (Madagascar periwinkle).